A 104-amino-acid chain; its full sequence is Late embryogenis abundant protein 41 (104 aa).

Residues 1 to 31 constitute a mitochondrion transit peptide; the sequence is MAARSLSGAVKSLCSAASGSLSCSIVLRRSY.

It belongs to the LEA type 3 family.

It localises to the mitochondrion. This chain is Late embryogenis abundant protein 41, found in Arabidopsis thaliana (Mouse-ear cress).